Here is a 198-residue protein sequence, read N- to C-terminus: Hookworm platelet inhibitor 1 (198 aa).

An N-terminal signal peptide occupies residues 1-17; it reads MSSYLLVLVAILGFAYA. Disulfide bonds link Cys-24–Cys-65, Cys-78–Cys-146, Cys-141–Cys-154, Cys-174–Cys-186, and Cys-177–Cys-195.

It belongs to the CRISP family. Monomer. Detected in cephalic glands.

The protein localises to the secreted. Hookworms inhibitor of platelet aggregation and adhesion. Native protein inhibits platelet aggregation induced by ADP, epinephrine, and thrombin. In addition, it prevents adhesion of resting platelets to immobilized fibrinogen and collagen. May act by binding to glycoprotein IIb/IIIa (ITGA2B/ITGB3) and integrin alpha-2/beta-1 (ITGA1/ITGB1), respectively. It is noteworthy that the recombinant protein fails to inhibit binding to fibrinogen (through ITGA2B/ITGB3) and collagen (through ITGA1/ITGB1). This is Hookworm platelet inhibitor 1 from Ancylostoma caninum (Dog hookworm).